The following is a 110-amino-acid chain: Putative zinc finger protein ORF110 (110 aa).

The C2H2-type zinc finger occupies 3–26 (YVCTACKLKFHTFEEFKIHVHLFH).

The polypeptide is Putative zinc finger protein ORF110 (Acidianus filamentous virus 1 (isolate United States/Yellowstone) (AFV-1)).